The following is a 500-amino-acid chain: ATP synthase subunit alpha (500 aa).

Residue 168–175 (GDRQTGKT) coordinates ATP.

It belongs to the ATPase alpha/beta chains family. In terms of assembly, F-type ATPases have 2 components, CF(1) - the catalytic core - and CF(0) - the membrane proton channel. CF(1) has five subunits: alpha(3), beta(3), gamma(1), delta(1), epsilon(1). CF(0) has three main subunits: a(1), b(2) and c(9-12). The alpha and beta chains form an alternating ring which encloses part of the gamma chain. CF(1) is attached to CF(0) by a central stalk formed by the gamma and epsilon chains, while a peripheral stalk is formed by the delta and b chains.

The protein localises to the cell membrane. The enzyme catalyses ATP + H2O + 4 H(+)(in) = ADP + phosphate + 5 H(+)(out). Its function is as follows. Produces ATP from ADP in the presence of a proton gradient across the membrane. The alpha chain is a regulatory subunit. This is ATP synthase subunit alpha from Streptococcus suis (strain 98HAH33).